Here is a 432-residue protein sequence, read N- to C-terminus: Testis-specific Y-encoded-like protein 1 (432 aa).

3 disordered regions span residues 1–31 (MSGR…PDPS), 54–110 (ALPP…LETA), and 116–135 (TDDS…LSRE). K160 is covalently cross-linked (Glycyl lysine isopeptide (Lys-Gly) (interchain with G-Cter in SUMO2)).

Belongs to the nucleosome assembly protein (NAP) family. Ubiquitinated by the CRL2(APPBP2) complex, which recognizes the Arg-Xaa-Xaa-Gly sequence at the C-terminus, leading to its degradation.

Its subcellular location is the nucleus. It is found in the nucleolus. The protein is Testis-specific Y-encoded-like protein 1 (TSPYL1) of Bos taurus (Bovine).